The sequence spans 112 residues: Integration host factor subunit alpha (112 aa).

Belongs to the bacterial histone-like protein family. As to quaternary structure, heterodimer of an alpha and a beta chain.

Functionally, this protein is one of the two subunits of integration host factor, a specific DNA-binding protein that functions in genetic recombination as well as in transcriptional and translational control. The polypeptide is Integration host factor subunit alpha (Rhizobium etli (strain ATCC 51251 / DSM 11541 / JCM 21823 / NBRC 15573 / CFN 42)).